Consider the following 360-residue polypeptide: Zinc metalloproteinase nas-5 (360 aa).

An N-terminal signal peptide occupies residues 1–21 (MDIKQLLLSIILTVSVVNGRG). The Peptidase M12A domain maps to 61–269 (NALLSNSPLR…KKVCAIYHCS (209 aa)). N-linked (GlcNAc...) asparagine glycosylation occurs at Asn-108. 2 cysteine pairs are disulfide-bonded: Cys-111–Cys-268 and Cys-134–Cys-157. His-165 is a Zn(2+) binding site. The active site involves Glu-166. Zn(2+) is bound by residues His-169 and His-175. The region spanning 299 to 336 (QGDSCTDRLGICPMLKSREMLNCKVMATFCCSSCSAPT) is the PLAC domain.

Requires Zn(2+) as cofactor.

The protein localises to the secreted. In terms of biological role, metalloprotease. The protein is Zinc metalloproteinase nas-5 (nas-5) of Caenorhabditis elegans.